A 413-amino-acid chain; its full sequence is GMICRHPIYLERTVRMIGSDIANTSKGTGVVHIAPAHGMDDFGIGQKHNLSTESSVNSDGEFMANIAPNLEGKFIFTSGNEAVVEMLKEEMNLFHEHDYKHSYPYDWRTKQPIFVHTSNQWFVDTAMLANKAEAAISGITTYPDNGISSMLNRLQLRSYWCISRQRAWGLPIPVFYHKESGELLLNESTIQHLVSLVLKHGADIWWEGTELLPTQYNADEYERGRDILDIWFDSGVSWDCVLRDSKNRTTQADFYIEGKDQYGGWFQSSLLTSVGLQGVAPYKNLMVHGFVLDEKGQKMSKSIGNVVDPMVLTNGGKNPQRDPAYGADALRWWVAESNVHQDVHISTTIIKSAAESVQKIRNSVRFMLGNLNEFDKMKIVPTPAMLILDLRYRFEDKKLWYVTSMNYPLNLSV.

Positions 298 to 302 (KMSKS) match the 'KMSKS' region motif. Position 301 (Lys-301) interacts with ATP.

This sequence belongs to the class-I aminoacyl-tRNA synthetase family.

The protein localises to the mitochondrion matrix. The catalysed reaction is tRNA(Ile) + L-isoleucine + ATP = L-isoleucyl-tRNA(Ile) + AMP + diphosphate. This is Probable isoleucine--tRNA ligase, mitochondrial from Ciona intestinalis (Transparent sea squirt).